The following is a 268-amino-acid chain: Undecaprenyl-diphosphatase 1 (268 aa).

A run of 7 helical transmembrane segments spans residues 5 to 25, 43 to 63, 81 to 101, 107 to 127, 185 to 205, 214 to 234, and 248 to 268; these read TIVE…IPVS, GKAF…SVYF, HFVI…ALAH, VLFE…VILL, AEFS…FDLF, ADLP…LFVV, and LFGW…MIWG.

It belongs to the UppP family.

It is found in the cell inner membrane. The catalysed reaction is di-trans,octa-cis-undecaprenyl diphosphate + H2O = di-trans,octa-cis-undecaprenyl phosphate + phosphate + H(+). Catalyzes the dephosphorylation of undecaprenyl diphosphate (UPP). Confers resistance to bacitracin. In Mesorhizobium japonicum (strain LMG 29417 / CECT 9101 / MAFF 303099) (Mesorhizobium loti (strain MAFF 303099)), this protein is Undecaprenyl-diphosphatase 1.